The sequence spans 216 residues: Adenylate kinase (216 aa).

An ATP-binding site is contributed by G10–T15. Positions S30 to V59 are NMP. AMP is bound by residues T31, R36, Q57–V59, G85–R88, and Q92. The interval G122–D159 is LID. Residues R123 and T132 to Y133 each bind ATP. Positions 156 and 167 each coordinate AMP. G202 provides a ligand contact to ATP.

This sequence belongs to the adenylate kinase family. Monomer.

It localises to the cytoplasm. The catalysed reaction is AMP + ATP = 2 ADP. It functions in the pathway purine metabolism; AMP biosynthesis via salvage pathway; AMP from ADP: step 1/1. In terms of biological role, catalyzes the reversible transfer of the terminal phosphate group between ATP and AMP. Plays an important role in cellular energy homeostasis and in adenine nucleotide metabolism. The polypeptide is Adenylate kinase (Pseudomonas putida (strain GB-1)).